A 126-amino-acid chain; its full sequence is Large ribosomal subunit protein uL22 (126 aa).

This sequence belongs to the universal ribosomal protein uL22 family. In terms of assembly, part of the 50S ribosomal subunit.

Functionally, this protein binds specifically to 23S rRNA; its binding is stimulated by other ribosomal proteins, e.g. L4, L17, and L20. It is important during the early stages of 50S assembly. It makes multiple contacts with different domains of the 23S rRNA in the assembled 50S subunit and ribosome. In terms of biological role, the globular domain of the protein is located near the polypeptide exit tunnel on the outside of the subunit, while an extended beta-hairpin is found that lines the wall of the exit tunnel in the center of the 70S ribosome. The chain is Large ribosomal subunit protein uL22 from Zymomonas mobilis subsp. mobilis (strain ATCC 31821 / ZM4 / CP4).